Reading from the N-terminus, the 400-residue chain is Na(+)/H(+) antiporter NhaA (400 aa).

The next 11 helical transmembrane spans lie at 10–30 (FNLEASGGIVLALAAIAAMII), 60–80 (AHHWINDGLMAVFFFLVGLEL), 95–115 (IILPAGAALGGMIMPAIVYLF), 126–146 (GWAIPAATDIAFALGILSLLG), 155–175 (VFLVSIAIFDDIGAIIIIALF), 178–198 (NDLSLGSLAIAGLCLPFLYLL), 218–238 (VAVLKSGIHATLAGVVLALFI), 265–285 (GILPLFAFANAGISLKGAGFG), 295–315 (IAAGLFIGKQVGVMLMCWLIF), 334–354 (AALLCGVGFTMSLFIGGLAFA), and 364–384 (LGIIMGSIVSGIAGYMMLKAT).

The protein belongs to the NhaA Na(+)/H(+) (TC 2.A.33) antiporter family.

It is found in the cell inner membrane. It carries out the reaction Na(+)(in) + 2 H(+)(out) = Na(+)(out) + 2 H(+)(in). Na(+)/H(+) antiporter that extrudes sodium in exchange for external protons. The sequence is that of Na(+)/H(+) antiporter NhaA from Psychrobacter cryohalolentis (strain ATCC BAA-1226 / DSM 17306 / VKM B-2378 / K5).